The following is an 892-amino-acid chain: MELKEKAKVVITVASLVAVTILFVTEYRRRRQRRKQTSSLSSCYLHSELKPQFGFKRVLADNSYSEFKHLKLVDASSSSLEKPSNGHPYETEITVLLENPQIEFGFLRGECSLEMSDSYVWVETESQLKELAEILAKEQVFAVDTEQHSLRSFLGFTALIQISTHEEDFLVDTIALHDVMSILRPVFSDPNICKVFHGADNDVIWLQRDFHIYVVNMFDTAKACEVLSKPQRSLAYLLETVCGVATNKLLQREDWRQRPLSEEMVRYARTDAHYLLYIADSLTTELKQLATEDSSSPDDRFHFLLEASRRSNMTCLQLYTKETEDFPGSAASSSIIYRHLNGHGDKSNISLNAEELVRKLCAWRDLMGRIHDESTRYVLSDQAIVGLSCKQPTTTEEIYDTIAHIDLATESSPSLSSSVQSPYPVICSHLDDIYKMILDKLAKLDDLLPVVLKKCLGTNGTCPISVFNYSLLVNFKTKLSSHSAPKQNGHKNFKQQFTRKASRELFVKKFSCKAPVYHNCRIYANDGRLLCYCDKRKLEWYLNRGLAKLVEENPPAIMLLFEPKGRPEDEGNDFYIQTKRNICVGCGEGKHYLRYRIIPSCYRVHFPEHLKSHRSHDIVLLCVDCHEVAHAAAERYKKQIATEFGIPLFVRRVLDSKEAQGTSSLVEDESTGDSEDAGVSPLHLRSAAMALLRHGNRMPSSRREELLQTVKMYYGGRDLSEEDLEKALLIGLSPHERRKLERKKGVSFKHSAEVAGMDKQEDENNDGEALADFEKIMTVERSTVVDDSGDGTSEGDGAKELNDTQCNGNTLHQQNSKLSLLGHGPHGKQIVEYLLREHGEDGVRDFCQRWRKVFVDAVHPRHLPGGWNVSHSGRRDFGEFSVYNPTKRLSTE.

The 3'-5' exonuclease domain occupies 119–287 (YVWVETESQL…IADSLTTELK (169 aa)). The 87-residue stretch at 350–436 (SLNAEELVRK…CSHLDDIYKM (87 aa)) folds into the HRDC domain. Residues 785-811 (VDDSGDGTSEGDGAKELNDTQCNGNTL) form a disordered region.

The protein localises to the cytoplasm. It is found in the cytosol. This chain is Protein RRP6-like 3, found in Arabidopsis thaliana (Mouse-ear cress).